We begin with the raw amino-acid sequence, 94 residues long: Co-chaperonin GroES (94 aa).

It belongs to the GroES chaperonin family. In terms of assembly, heptamer of 7 subunits arranged in a ring. Interacts with the chaperonin GroEL.

The protein resides in the cytoplasm. Functionally, together with the chaperonin GroEL, plays an essential role in assisting protein folding. The GroEL-GroES system forms a nano-cage that allows encapsulation of the non-native substrate proteins and provides a physical environment optimized to promote and accelerate protein folding. GroES binds to the apical surface of the GroEL ring, thereby capping the opening of the GroEL channel. In Staphylococcus epidermidis (strain ATCC 35984 / DSM 28319 / BCRC 17069 / CCUG 31568 / BM 3577 / RP62A), this protein is Co-chaperonin GroES.